The sequence spans 640 residues: Tyrosine--tRNA ligase, mitochondrial (640 aa).

Y100 is an L-tyrosine binding site. Residue D104 coordinates ATP. The 'HIGH' region motif lies at P105–H114. 5 residues coordinate L-tyrosine: D144, Y248, Q252, D255, and Q274. The 'KMSKS' region motif lies at K322 to S326. K325 serves as a coordination point for ATP.

It belongs to the class-I aminoacyl-tRNA synthetase family.

It is found in the mitochondrion matrix. The enzyme catalyses tRNA(Tyr) + L-tyrosine + ATP = L-tyrosyl-tRNA(Tyr) + AMP + diphosphate + H(+). Its function is as follows. Has both an aminoacyl-tRNA synthetase activity and is involved in the splicing of group I introns. In Podospora anserina (Pleurage anserina), this protein is Tyrosine--tRNA ligase, mitochondrial (YTS1).